Reading from the N-terminus, the 626-residue chain is Phosphomethylpyrimidine synthase (626 aa).

Residues 1-22 form a disordered region; it reads MTKQEKAINLSESAQVDQQSVQ. Positions 10–22 are enriched in polar residues; the sequence is LSESAQVDQQSVQ. Substrate is bound by residues N232, M261, Y290, H326, 346–348, 387–390, and E426; these read SRG and DGLR. H430 is a binding site for Zn(2+). Y453 provides a ligand contact to substrate. Zn(2+) is bound at residue H494. The [4Fe-4S] cluster site is built by C574, C577, and C582.

Belongs to the ThiC family. Homodimer. Requires [4Fe-4S] cluster as cofactor.

The enzyme catalyses 5-amino-1-(5-phospho-beta-D-ribosyl)imidazole + S-adenosyl-L-methionine = 4-amino-2-methyl-5-(phosphooxymethyl)pyrimidine + CO + 5'-deoxyadenosine + formate + L-methionine + 3 H(+). It participates in cofactor biosynthesis; thiamine diphosphate biosynthesis. In terms of biological role, catalyzes the synthesis of the hydroxymethylpyrimidine phosphate (HMP-P) moiety of thiamine from aminoimidazole ribotide (AIR) in a radical S-adenosyl-L-methionine (SAM)-dependent reaction. The chain is Phosphomethylpyrimidine synthase from Pseudomonas putida (strain ATCC 47054 / DSM 6125 / CFBP 8728 / NCIMB 11950 / KT2440).